The sequence spans 357 residues: MADAGKKKLVQQEELRRLMKAKQRRSCSKKRIESPLAKYNSLGHLLCVVCNIQIKSELLWPAHILGKQHKEKVAELKGSKANISSPSNKVQLHHIMKRKGSEPENQESKRIKGTEDQPTALKTKLPEGFFETEETSSAKHAAEKAPSLKLLAGDYEDDDEVEGEEYENVNEASTSLQKPAEIPLPPPTSSADRLPADFFESKMPLVSHSGSVLKADIQEKIVERKDNTAEALPEGFFDDPEADAKVRKVDAPKDQMDKEWEEFQKEIRQVNSVSDAIVAEEDEEGRLDRQIDEIDEQIECYRRVEHLRDLKDTLQDAKMEVLKSKSSKKWQEEIGSDDEETLPSLLYKNWRDKGAFL.

Residues Cys47–His69 form a C2H2-type zinc finger. Disordered regions lie at residues Arg98–Pro126, Asp157–Leu194, and Ala231–Gln255. The span at Lys99–Glu115 shows a compositional bias: basic and acidic residues. Residues Asp157–Asn168 are compositionally biased toward acidic residues. Residues Ala242 to Gln255 show a composition bias toward basic and acidic residues. Residues Ala279 to Lys325 adopt a coiled-coil conformation.

It localises to the nucleus. Its subcellular location is the chromosome. The protein resides in the nucleus speckle. Its function is as follows. May act as an important regulator of the cell cycle that participates in the maintenance of genome integrity. This is Zinc finger protein 830 from Xenopus tropicalis (Western clawed frog).